The primary structure comprises 628 residues: DEAD-box ATP-dependent RNA helicase 9 (628 aa).

The short motif at 98 to 126 (LEVAKLGISPKIVSQLASRGITKLFPIQR) is the Q motif element. A Helicase ATP-binding domain is found at 129–302 (LEPAMQGKDM…QKYLKNPVTI (174 aa)). Residue 142–149 (AKTGTGKT) participates in ATP binding. The short motif at 250–253 (DEAD) is the DEAD box element. The Helicase C-terminal domain occupies 331–478 (VLGELIKEHA…KINVEGSDLM (148 aa)). 2 disordered regions span residues 496–548 (GSYG…SGFG) and 571–628 (SGFG…FGSS). Over residues 500-509 (RRGSFGSSSS) the composition is skewed to low complexity. A compositionally biased stretch (gly residues) spans 510 to 548 (RGGGFGDSGFGRSGGGFGRSGGGGFGRSSGGGFGDSGFG).

Belongs to the DEAD box helicase family. DDX21/DDX50 subfamily.

It carries out the reaction ATP + H2O = ADP + phosphate + H(+). This chain is DEAD-box ATP-dependent RNA helicase 9, found in Oryza sativa subsp. japonica (Rice).